The chain runs to 280 residues: MIILDGKKLSQKDTIFLKEKVNQFKIKPVFTIVQVGNLFSSNKYIKTKMDKALEIGVVSRLIKIPESISEKDLISIIEEESKISHGLIVQLPLPLQFDQSKILNSVPITKDIDGLSEKNSKNLYSGKSCIQPATARGIIDLIKEYNFTIKDKKVYVIGESNLVGKPIKELFKQAGAIVKSFNINTGIKGSEEADILIVAAGHPNLVKPENVKNNSIVIDVGINSIGENDKMIVTGDVDFSNVKTKVKAISPVPGGVGPMTVISLFKNLIEIFEKYLLDDN.

NADP(+) is bound by residues 158 to 160 (GES), isoleucine 183, and isoleucine 222.

It belongs to the tetrahydrofolate dehydrogenase/cyclohydrolase family. In terms of assembly, homodimer.

It catalyses the reaction (6R)-5,10-methylene-5,6,7,8-tetrahydrofolate + NADP(+) = (6R)-5,10-methenyltetrahydrofolate + NADPH. The catalysed reaction is (6R)-5,10-methenyltetrahydrofolate + H2O = (6R)-10-formyltetrahydrofolate + H(+). The protein operates within one-carbon metabolism; tetrahydrofolate interconversion. Functionally, catalyzes the oxidation of 5,10-methylenetetrahydrofolate to 5,10-methenyltetrahydrofolate and then the hydrolysis of 5,10-methenyltetrahydrofolate to 10-formyltetrahydrofolate. In Mycoplasma mobile (strain ATCC 43663 / 163K / NCTC 11711) (Mesomycoplasma mobile), this protein is Bifunctional protein FolD.